A 344-amino-acid polypeptide reads, in one-letter code: Glyceraldehyde-3-phosphate dehydrogenase (344 aa).

Residues 11–12 (TI) and G110 contribute to the NAD(+) site. 139-141 (SCN) serves as a coordination point for D-glyceraldehyde 3-phosphate. C140 functions as the Nucleophile in the catalytic mechanism. R169 provides a ligand contact to NAD(+). 195 to 196 (HG) is a binding site for D-glyceraldehyde 3-phosphate. Residue Q302 participates in NAD(+) binding.

The protein belongs to the glyceraldehyde-3-phosphate dehydrogenase family. As to quaternary structure, homotetramer.

The protein resides in the cytoplasm. It catalyses the reaction D-glyceraldehyde 3-phosphate + phosphate + NADP(+) = (2R)-3-phospho-glyceroyl phosphate + NADPH + H(+). The catalysed reaction is D-glyceraldehyde 3-phosphate + phosphate + NAD(+) = (2R)-3-phospho-glyceroyl phosphate + NADH + H(+). It functions in the pathway carbohydrate degradation; glycolysis; pyruvate from D-glyceraldehyde 3-phosphate: step 1/5. This is Glyceraldehyde-3-phosphate dehydrogenase from Pyrobaculum arsenaticum (strain DSM 13514 / JCM 11321 / PZ6).